Reading from the N-terminus, the 396-residue chain is G-protein coupled receptor 84 (396 aa).

The Extracellular portion of the chain corresponds to 1 to 26; the sequence is MWNASDVNFSCYHESVLGYRYVAVSW. N-linked (GlcNAc...) asparagine glycans are attached at residues N3 and N8. A helical membrane pass occupies residues 27 to 47; sequence GIVVAVTGTVGNVLTLLALAI. At 48–57 the chain is on the cytoplasmic side; sequence QPKLRTRFNL. Residues 58–78 form a helical membrane-spanning segment; sequence LIANLTVADLLYCTLLQPFSV. Topologically, residues 79–94 are extracellular; the sequence is DTYLHLHWRTGATFCQ. Residues 95 to 115 traverse the membrane as a helical segment; sequence IFGFLLFVSNSVSILTLCLIA. The Cytoplasmic portion of the chain corresponds to 116–144; that stretch reads LGRYLLIAHPKLFPQVFSAKGIVLALVST. The helical transmembrane segment at 145–165 threads the bilayer; it reads WVVAVASFAPLWPIYILVPVV. Over 166–180 the chain is Extracellular; it reads CTCSFDRIRGQPYTT. A helical membrane pass occupies residues 181 to 201; sequence ILMGIYFVVGLSSVGVFYCLI. Residues 202 to 320 lie on the Cytoplasmic side of the membrane; the sequence is HQQVKRAAQA…PSEFGKVTRM (119 aa). S221 and S224 each carry phosphoserine. The disordered stretch occupies residues 243-310; it reads SGLASGGPSE…TKGAQRAQDS (68 aa). Residues T263 and T264 each carry the phosphothreonine modification. Residues 321 to 341 traverse the membrane as a helical segment; the sequence is CFAVFLCFTLSYIPFLLLNIL. The Extracellular portion of the chain corresponds to 342–352; it reads DAKVQAPRVVH. The chain crosses the membrane as a helical span at residues 353-373; the sequence is MLAANLTWLNGCINPVLYAAM. The Cytoplasmic segment spans residues 374–396; that stretch reads NRQFRQAYGSLLRRGPQSFHRFH.

It belongs to the G-protein coupled receptor 1 family. Interacts with ARRB2 and ARR3. Phosphorylated by a subset of GPR84-activating ligands. Constitutively phosphorylated at Ser-221 and Ser-224 in the absence of 2-HTP. By contrast, Thr-263 and Thr-264 are phosphorylated only following prior cell treatment with 2-HTP.

It localises to the cell membrane. G protein-coupled receptor that responds endogenously to dietary fatty acids or nutrient, specifically medium-chain free fatty acid (FFA) with carbon chain lengths of C9 to C14. Capric acid (C10:0), undecanoic acid (C11:0) and lauric acid (C12:0) are the most potent agonists. In immune cells, functions as a pro-inflammatory receptor via 6-OAU and promotes the expression of pro-inflammatory mediators such as TNFalpha, IL-6 and IL-12B as well as stimulating chemotactic responses through activation of signaling mediators AKT, ERK and NF-kappa-B. In addition, triggers increased bacterial adhesion and phagocytosis in macrophages and regulates pro-inflammatory function via enhancing NLRP3 inflammasome activation. Also plays an important role in inflammation by modulating neutrophil functions. Mechanistically, promotes neutrophil chemotaxis, reactive oxygen species (ROS) production and degranulation via LYN-AKT/ERK pathway. To regulate ROS, communicates with the two formyl peptide receptors FPR2 and FPR1 to control the NADPH oxidase activity in neutrophils. The chain is G-protein coupled receptor 84 (GPR84) from Bos taurus (Bovine).